We begin with the raw amino-acid sequence, 327 residues long: Glutaminase (327 aa).

6 residues coordinate substrate: serine 92, asparagine 143, asparagine 195, tyrosine 218, tyrosine 263, and valine 281.

Belongs to the glutaminase family. Homotetramer.

The enzyme catalyses L-glutamine + H2O = L-glutamate + NH4(+). This chain is Glutaminase, found in Synechocystis sp. (strain ATCC 27184 / PCC 6803 / Kazusa).